The chain runs to 307 residues: Protein pid-3 (307 aa).

In terms of assembly, component of the pid-1 variant of the PETISCO complex (also called the pid-3, erh-2, tofu-6, and ife-3 small RNA complex) containing at least pid-1, tofu-6, ife-3, pid-3, and erh-2, which is required for the biogenesis of a class of 21 nucleotide PIWI-interacting RNAs (piRNAs) that possess a uracil residue at the 5'-end (also called 21U-RNAs). Within the complex interacts with pid-1; the interaction is direct. Component of the tost-1 variant of the PETISCO complex (also called the pid-3, erh-2, tofu-6, and ife-3 small RNA complex) containing at least tost-1, tofu-6, ife-3, pid-3, and erh-2, which plays an essential role in embryogenesis. Within the complex interacts with tost-1. Within the pid-1 and tost-1 variants of the PETISCO complexes interacts with tofu-6 (via the RRM domain) and erh-2. In contrast to the pid-1 variant of the PETISCO complex, the tost-1 variant of the PETISCO complex plays a minor role in the biogenesis of 21U-RNAs. Expressed in the germline (at protein level).

It is found in the cytoplasm. Its subcellular location is the perinuclear region. The protein localises to the nucleus. Its function is as follows. Component of the pid-1 and tost-1 variants of the PETISCO complexes, which have roles in the biogenesis of a class of 21 nucleotide PIWI-interacting RNAs (piRNAs) that possess a uracil residue at the 5'-end (also called 21U-RNAs) and embryogenesis, respectively. Within the pid-1 variant of the PETISCO complex may stabilize 21U-RNA precursor molecules. Promotes the biogenesis of 21U-RNAs. Required for chromosome segregation and cell division in early embryos. In Caenorhabditis elegans, this protein is Protein pid-3.